We begin with the raw amino-acid sequence, 133 residues long: Small ribosomal subunit protein bS6 (133 aa).

Belongs to the bacterial ribosomal protein bS6 family.

Binds together with bS18 to 16S ribosomal RNA. This chain is Small ribosomal subunit protein bS6, found in Chlorobium phaeovibrioides (strain DSM 265 / 1930) (Prosthecochloris vibrioformis (strain DSM 265)).